The primary structure comprises 197 residues: Na(+)-translocating NADH-quinone reductase subunit E (197 aa).

The next 6 helical transmembrane spans lie at 11–31 (SVFI…FLAV), 35–55 (VSTA…SVPV), 76–96 (FLKF…LEMF), 108–128 (LGIY…VSFM), 139–159 (VVYG…LAGI), and 175–195 (LGIT…FSGI).

The protein belongs to the NqrDE/RnfAE family. Composed of six subunits; NqrA, NqrB, NqrC, NqrD, NqrE and NqrF.

Its subcellular location is the cell inner membrane. It catalyses the reaction a ubiquinone + n Na(+)(in) + NADH + H(+) = a ubiquinol + n Na(+)(out) + NAD(+). Functionally, NQR complex catalyzes the reduction of ubiquinone-1 to ubiquinol by two successive reactions, coupled with the transport of Na(+) ions from the cytoplasm to the periplasm. NqrA to NqrE are probably involved in the second step, the conversion of ubisemiquinone to ubiquinol. The polypeptide is Na(+)-translocating NADH-quinone reductase subunit E (Neisseria meningitidis serogroup C (strain 053442)).